The following is a 79-amino-acid chain: uncharacterized protein (79 aa).

The protein resides in the mitochondrion. This is an uncharacterized protein from Oenothera berteroana (Bertero's evening primrose).